The sequence spans 236 residues: Small ribosomal subunit protein uS3 (236 aa).

In terms of domain architecture, KH type-2 spans 39–107 (IRSYVLEELR…ETSLNIVEIR (69 aa)). Residues 214 to 236 (ASERRATEADQSGSSSNRRRENA) are disordered.

Belongs to the universal ribosomal protein uS3 family. Part of the 30S ribosomal subunit. Forms a tight complex with proteins S10 and S14.

In terms of biological role, binds the lower part of the 30S subunit head. Binds mRNA in the 70S ribosome, positioning it for translation. The sequence is that of Small ribosomal subunit protein uS3 from Bartonella tribocorum (strain CIP 105476 / IBS 506).